The primary structure comprises 209 residues: MQLSANQQRIIGCLLEKQSTTPEHYPLSLNALTNACNQKSNRAPVLNLTDSEVQIALDELINARLVTIDEGLSGRVNKYDHRFCNTEFSSLKFSAQQRAIICLLLLRGAQTPGELKTRCARLANFNSVDDVELALNKLIESDIVTKLAREPGKRDCRYMHLLGEQPISEITRPAEQATDELKSEELNELLAEVDELKTELQKIKAHLGL.

Belongs to the UPF0502 family.

The polypeptide is UPF0502 protein PSHAa0076 (Pseudoalteromonas translucida (strain TAC 125)).